Reading from the N-terminus, the 35-residue chain is Jingzhaotoxin F5-21.66 (35 aa).

3 cysteine pairs are disulfide-bonded: C2–C16, C9–C21, and C15–C29.

This sequence belongs to the neurotoxin 10 (Hwtx-1) family. 48 (Jztx-F5) subfamily. Expressed by the venom gland.

It localises to the secreted. Its function is as follows. Probable ion channel inhibitor. This is Jingzhaotoxin F5-21.66 from Chilobrachys guangxiensis (Chinese earth tiger tarantula).